We begin with the raw amino-acid sequence, 394 residues long: Flap endonuclease 1 (394 aa).

Residues 1-104 (MGIKQLFTII…GELARRYQRK (104 aa)) are N-domain. Residue aspartate 34 coordinates Mg(2+). DNA-binding residues include arginine 47 and arginine 70. Mg(2+) is bound by residues aspartate 86, glutamate 158, glutamate 160, aspartate 179, and aspartate 181. Residues 122–253 (DVEKFSRRTV…STALKLIREH (132 aa)) form an I-domain region. Glutamate 158 lines the DNA pocket. The DNA site is built by glycine 231 and aspartate 233. Aspartate 233 lines the Mg(2+) pocket. The segment at 340–348 (QQQRLEGFF) is interaction with PCNA. The tract at residues 358–394 (QKAHKRKLEVKAEEAKKKLKAEKKEKAKAKARPRGTA) is disordered. The segment covering 374 to 394 (KKLKAEKKEKAKAKARPRGTA) has biased composition (basic residues).

This sequence belongs to the XPG/RAD2 endonuclease family. FEN1 subfamily. Interacts with PCNA. Three molecules of FEN1 bind to one PCNA trimer with each molecule binding to one PCNA monomer. PCNA stimulates the nuclease activity without altering cleavage specificity. Mg(2+) serves as cofactor. Post-translationally, phosphorylated. Phosphorylation upon DNA damage induces relocalization to the nuclear plasma.

It is found in the nucleus. The protein resides in the nucleolus. It localises to the nucleoplasm. Its subcellular location is the mitochondrion. In terms of biological role, structure-specific nuclease with 5'-flap endonuclease and 5'-3' exonuclease activities involved in DNA replication and repair. During DNA replication, cleaves the 5'-overhanging flap structure that is generated by displacement synthesis when DNA polymerase encounters the 5'-end of a downstream Okazaki fragment. It enters the flap from the 5'-end and then tracks to cleave the flap base, leaving a nick for ligation. Also involved in the long patch base excision repair (LP-BER) pathway, by cleaving within the apurinic/apyrimidinic (AP) site-terminated flap. Acts as a genome stabilization factor that prevents flaps from equilibrating into structures that lead to duplications and deletions. Also possesses 5'-3' exonuclease activity on nicked or gapped double-stranded DNA, and exhibits RNase H activity. Also involved in replication and repair of rDNA and in repairing mitochondrial DNA. In Pyricularia oryzae (strain 70-15 / ATCC MYA-4617 / FGSC 8958) (Rice blast fungus), this protein is Flap endonuclease 1.